The chain runs to 357 residues: UPF0283 membrane protein BMEI0952 (357 aa).

Residues 1-36 form a disordered region; it reads MSDKTPRKPTAFRLEQPARVSAASEQEEPRRPRAVK. A compositionally biased stretch (basic and acidic residues) spans 27-36; that stretch reads EEPRRPRAVK. A run of 2 helical transmembrane segments spans residues 78-98 and 109-129; these read ILFG…TEDL and LGWT…AIIL.

This sequence belongs to the UPF0283 family.

The protein localises to the cell inner membrane. In Brucella melitensis biotype 1 (strain ATCC 23456 / CCUG 17765 / NCTC 10094 / 16M), this protein is UPF0283 membrane protein BMEI0952.